The sequence spans 471 residues: Siroheme synthase (471 aa).

The tract at residues 1 to 203 (MDYLPLFADI…GDWESAEKTL (203 aa)) is precorrin-2 dehydrogenase /sirohydrochlorin ferrochelatase. Residues 22 to 23 (EV) and 43 to 44 (KN) contribute to the NAD(+) site. Ser128 carries the phosphoserine modification. A uroporphyrinogen-III C-methyltransferase region spans residues 215-471 (GEIILVGAGP…DTKSSLINLA (257 aa)). Pro224 serves as a coordination point for S-adenosyl-L-methionine. Residue Asp247 is the Proton acceptor of the active site. Residue Lys269 is the Proton donor of the active site. S-adenosyl-L-methionine contacts are provided by residues 300 to 302 (GGD), Ile305, 330 to 331 (TA), Met382, and Ala411.

It in the N-terminal section; belongs to the precorrin-2 dehydrogenase / sirohydrochlorin ferrochelatase family. The protein in the C-terminal section; belongs to the precorrin methyltransferase family.

It catalyses the reaction uroporphyrinogen III + 2 S-adenosyl-L-methionine = precorrin-2 + 2 S-adenosyl-L-homocysteine + H(+). The enzyme catalyses precorrin-2 + NAD(+) = sirohydrochlorin + NADH + 2 H(+). The catalysed reaction is siroheme + 2 H(+) = sirohydrochlorin + Fe(2+). It functions in the pathway cofactor biosynthesis; adenosylcobalamin biosynthesis; precorrin-2 from uroporphyrinogen III: step 1/1. It participates in cofactor biosynthesis; adenosylcobalamin biosynthesis; sirohydrochlorin from precorrin-2: step 1/1. The protein operates within porphyrin-containing compound metabolism; siroheme biosynthesis; precorrin-2 from uroporphyrinogen III: step 1/1. Its pathway is porphyrin-containing compound metabolism; siroheme biosynthesis; siroheme from sirohydrochlorin: step 1/1. It functions in the pathway porphyrin-containing compound metabolism; siroheme biosynthesis; sirohydrochlorin from precorrin-2: step 1/1. Multifunctional enzyme that catalyzes the SAM-dependent methylations of uroporphyrinogen III at position C-2 and C-7 to form precorrin-2 via precorrin-1. Then it catalyzes the NAD-dependent ring dehydrogenation of precorrin-2 to yield sirohydrochlorin. Finally, it catalyzes the ferrochelation of sirohydrochlorin to yield siroheme. This chain is Siroheme synthase, found in Zymomonas mobilis subsp. mobilis (strain ATCC 31821 / ZM4 / CP4).